The chain runs to 406 residues: Zinc finger protein 793 (406 aa).

In terms of domain architecture, KRAB spans 8–79 (VSFKDVVVGF…EAACPGCHCW (72 aa)). 6 C2H2-type zinc fingers span residues 227 to 249 (HVCSECGKAFCYKSEFIRHQRSH), 255 to 277 (YGCTDCGKAFSHKSTLIKHQRIH), 283 to 305 (FECFFCGKAFTQKSHRTEHQRTH), 311 to 333 (FVCSECGKSFGEKSYLNVHRKMH), 339 to 361 (YRCRECGKSFSQKSCLNKHWRTH), and 367 to 389 (YGCNECGKAFYQKPNLSRHQKIH).

This sequence belongs to the krueppel C2H2-type zinc-finger protein family.

The protein resides in the nucleus. In terms of biological role, may be involved in transcriptional regulation. This Homo sapiens (Human) protein is Zinc finger protein 793 (ZNF793).